Reading from the N-terminus, the 443-residue chain is Signal recognition particle 54 kDa protein (443 aa).

GTP contacts are provided by residues 104–111 (GLQGSGKT), 184–188 (DTAGR), and 242–245 (TKLD).

It belongs to the GTP-binding SRP family. SRP54 subfamily. In terms of assembly, part of the signal recognition particle protein translocation system, which is composed of SRP and FtsY. Archaeal SRP consists of a 7S RNA molecule of 300 nucleotides and two protein subunits: SRP54 and SRP19.

The protein resides in the cytoplasm. The enzyme catalyses GTP + H2O = GDP + phosphate + H(+). In terms of biological role, involved in targeting and insertion of nascent membrane proteins into the cytoplasmic membrane. Binds to the hydrophobic signal sequence of the ribosome-nascent chain (RNC) as it emerges from the ribosomes. The SRP-RNC complex is then targeted to the cytoplasmic membrane where it interacts with the SRP receptor FtsY. In Methanosarcina mazei (strain ATCC BAA-159 / DSM 3647 / Goe1 / Go1 / JCM 11833 / OCM 88) (Methanosarcina frisia), this protein is Signal recognition particle 54 kDa protein.